A 451-amino-acid polypeptide reads, in one-letter code: Chromosomal replication initiator protein DnaA 2 (451 aa).

The interval 1–68 (MQAWEEFLKA…QQKFINGNNK (68 aa)) is domain I, interacts with DnaA modulators. The segment at 68-104 (KRIKIHLSVANTPQRAKKTKTANKEKDFKAPFELTFD) is domain II. The interval 105-326 (ELDPLCLFPY…KGLEALVLRL (222 aa)) is domain III, AAA+ region. Residues G156, G158, K159, and T160 each contribute to the ATP site. Residues 327 to 451 (HLDAKHSITA…CHIILKKLQG (125 aa)) form a domain IV, binds dsDNA region.

Belongs to the DnaA family. Oligomerizes as a right-handed, spiral filament on DNA at oriC.

The protein resides in the cytoplasm. In terms of biological role, plays an essential role in the initiation and regulation of chromosomal replication. ATP-DnaA binds to the origin of replication (oriC) to initiate formation of the DNA replication initiation complex once per cell cycle. Binds the DnaA box (a 9 base pair repeat at the origin) and separates the double-stranded (ds)DNA. Forms a right-handed helical filament on oriC DNA; dsDNA binds to the exterior of the filament while single-stranded (ss)DNA is stabiized in the filament's interior. The ATP-DnaA-oriC complex binds and stabilizes one strand of the AT-rich DNA unwinding element (DUE), permitting loading of DNA polymerase. After initiation quickly degrades to an ADP-DnaA complex that is not apt for DNA replication. Binds acidic phospholipids. In Protochlamydia amoebophila (strain UWE25), this protein is Chromosomal replication initiator protein DnaA 2.